We begin with the raw amino-acid sequence, 292 residues long: Fat storage-inducing transmembrane protein 1 (292 aa).

Over 1 to 18 (MERGPVVGAGLGAGARIQ) the chain is Lumenal. The helical transmembrane segment at 19 to 39 (ALLGCLLKVLLWVASALLYFG) threads the bilayer. Residues 40–54 (SEQAARLLGSPCLRR) lie on the Cytoplasmic side of the membrane. A helical transmembrane segment spans residues 55–75 (LYHAWLAAVVIFGPLLQFHVN). Over 76-94 (PRTIFASHGNFFNIKFVNS) the chain is Lumenal. Residues 95 to 115 (AWGWTCTFLGGFVLLVVFLAT) form a helical membrane-spanning segment. Residues 116–141 (RRVAVTARHLSRLVVGAAVWRGAGRA) are Cytoplasmic-facing. Residues 142-162 (FLLIEDLTGSCFEPLPQGLLL) traverse the membrane as a helical segment. The Lumenal portion of the chain corresponds to 163 to 187 (HELPDRRSCLAAGHQWRGYTVSSHT). H186 is an active-site residue. Residues 188-208 (FLLTFCCLLMAEEAAVFAKYL) traverse the membrane as a helical segment. The Cytoplasmic portion of the chain corresponds to 209–220 (AHGLPAGAPLRL). The chain crosses the membrane as a helical span at residues 221 to 241 (VFLLNVLLLGLWNFLLLCTVI). Residues 242–249 (YFHQYTHK) lie on the Lumenal side of the membrane. H244 is an active-site residue. The chain crosses the membrane as a helical span at residues 250-270 (VVGAAVGTFAWYLTYGSWYHQ). The Cytoplasmic portion of the chain corresponds to 271–292 (PWSPGSPGHGLFPRPHSSRKHN).

This sequence belongs to the FIT family. FIT1 subfamily. Primarily expressed in heart and skeletal muscle.

It is found in the endoplasmic reticulum membrane. In terms of biological role, plays an important role in the formation of lipid droplets (LDs) which are storage organelles at the center of lipid and energy homeostasis. Directly binds to diacylglycerol (DAGs) and triacylglycerol. The chain is Fat storage-inducing transmembrane protein 1 from Homo sapiens (Human).